The primary structure comprises 195 residues: Myelin-associated neurite-outgrowth inhibitor (195 aa).

M1 carries the N-acetylmethionine modification. The Cytoplasmic portion of the chain corresponds to 1–18 (MNPVYSPGSSGVPYANAK). S6 carries the phosphoserine modification. A helical transmembrane segment spans residues 19-42 (GIGYPAGFPMGYAAAAPAYSPNMY). The Extracellular portion of the chain corresponds to 43–142 (PGANPTFQAG…PAPLPPPRGN (100 aa)). A glycan (N-linked (GlcNAc...) asparagine) is linked at N46. Residues 143-164 (GVTMGMVAGTTMAMSAGTLLTA) form a helical membrane-spanning segment. Over 165–195 (HSPTPVAPHPVTVPTYRAPGTPTYSYVPPQW) the chain is Cytoplasmic.

Belongs to the FAM168 family. As to quaternary structure, may form homodimers. May interact with DAZAP2, FAM168A, PRDX6, RBM6, TMTC1 and YPEL2. Interacts with CDC27. In terms of processing, N-glycosylated.

Its subcellular location is the cytoplasm. The protein resides in the perinuclear region. It localises to the cell membrane. The protein localises to the cell projection. It is found in the axon. Functionally, inhibitor of neuronal axonal outgrowth. Acts as a negative regulator of CDC42 and STAT3 and a positive regulator of STMN2. Positive regulator of CDC27. The polypeptide is Myelin-associated neurite-outgrowth inhibitor (FAM168B) (Bos taurus (Bovine)).